Reading from the N-terminus, the 509-residue chain is 2,3-bisphosphoglycerate-independent phosphoglycerate mutase (509 aa).

Position 11 (D11) interacts with Mn(2+). Y35 bears the Phosphotyrosine mark. S61 serves as a coordination point for Mn(2+). The active-site Phosphoserine intermediate is S61. Residues H122, 152-153, R184, R190, 260-263, and K335 contribute to the substrate site; these read RD and RPDR. D402, H406, D443, H444, and H461 together coordinate Mn(2+).

Belongs to the BPG-independent phosphoglycerate mutase family. Monomer. It depends on Mn(2+) as a cofactor.

The catalysed reaction is (2R)-2-phosphoglycerate = (2R)-3-phosphoglycerate. It functions in the pathway carbohydrate degradation; glycolysis; pyruvate from D-glyceraldehyde 3-phosphate: step 3/5. Its function is as follows. Essential for rapid growth and for sporulation. Catalyzes the interconversion of 2-phosphoglycerate and 3-phosphoglycerate. The chain is 2,3-bisphosphoglycerate-independent phosphoglycerate mutase from Bacillus thuringiensis (strain Al Hakam).